Consider the following 286-residue polypeptide: Putative L-ribulose-5-phosphate 3-epimerase SgbU (286 aa).

It belongs to the L-ribulose-5-phosphate 3-epimerase family.

It carries out the reaction L-ribulose 5-phosphate = L-xylulose 5-phosphate. Functionally, catalyzes the isomerization of L-xylulose-5-phosphate to L-ribulose-5-phosphate (Potential). May be involved in the utilization of 2,3-diketo-L-gulonate. The protein is Putative L-ribulose-5-phosphate 3-epimerase SgbU (sgbU) of Escherichia coli (strain K12).